The chain runs to 168 residues: T-cell surface glycoprotein CD3 delta chain (168 aa).

The N-terminal stretch at 1–21 (MEHSRFLSCLILAALLSQVNP) is a signal peptide. Residues 22–102 (RILKVLEPED…CVELDTATLA (81 aa)) lie on the Extracellular side of the membrane. C37 and C74 form a disulfide bridge. 2 N-linked (GlcNAc...) asparagine glycosylation sites follow: N38 and N56. A helical membrane pass occupies residues 103–123 (GMIITDIIATVLLALGVYCFA). At 124–168 (GHETGRFSRAADTQALMGNDQLYQPLRERNDAQYSRLGDKWARNK) the chain is on the cytoplasmic side. An ITAM domain is found at 135 to 163 (DTQALMGNDQLYQPLRERNDAQYSRLGDK). Phosphotyrosine is present on residues Y146 and Y157.

In terms of assembly, the TCR-CD3 complex is composed of a CD3D/CD3E and a CD3G/CD3E heterodimers that preferentially associate with TCRalpha and TCRbeta, respectively, to form TCRalpha/CD3E/CD3G and TCRbeta/CD3G/CD3E trimers. In turn, the hexamer interacts with CD3Z homodimer to form the TCR-CD3 complex. Alternatively, TCRalpha and TCRbeta can be replaced by TCRgamma and TCRdelta. Interacts with coreceptors CD4 and CD8. Post-translationally, phosphorylated on Tyr residues after T-cell receptor triggering by LCK in association with CD4/CD8. As to expression, CD3D is mostly present on T-lymphocytes with its TCR-CD3 partners. Present also in fetal NK-cells.

The protein resides in the cell membrane. Its function is as follows. Part of the TCR-CD3 complex present on T-lymphocyte cell surface that plays an essential role in adaptive immune response. When antigen presenting cells (APCs) activate T-cell receptor (TCR), TCR-mediated signals are transmitted across the cell membrane by the CD3 chains CD3D, CD3E, CD3G and CD3Z. All CD3 chains contain immunoreceptor tyrosine-based activation motifs (ITAMs) in their cytoplasmic domain. Upon TCR engagement, these motifs become phosphorylated by Src family protein tyrosine kinases LCK and FYN, resulting in the activation of downstream signaling pathways. In addition of this role of signal transduction in T-cell activation, CD3D plays an essential role in thymocyte differentiation. Indeed, participates in correct intracellular TCR-CD3 complex assembly and surface expression. In absence of a functional TCR-CD3 complex, thymocytes are unable to differentiate properly. Interacts with CD4 and CD8 and thus serves to establish a functional link between the TCR and coreceptors CD4 and CD8, which is needed for activation and positive selection of CD4 or CD8 T-cells. The polypeptide is T-cell surface glycoprotein CD3 delta chain (CD3D) (Bos taurus (Bovine)).